Reading from the N-terminus, the 145-residue chain is Ecdysteroid-regulated 16 kDa protein (145 aa).

Positions 1–16 are cleaved as a signal peptide; it reads MLFYITVTVLLVSAQA. 2 disulfides stabilise this stretch: Cys-22–Cys-137 and Cys-90–Cys-97. Asn-51 carries an N-linked (GlcNAc...) asparagine glycan.

The protein belongs to the NPC2 family.

It is found in the secreted. This chain is Ecdysteroid-regulated 16 kDa protein (ESR16), found in Manduca sexta (Tobacco hawkmoth).